Reading from the N-terminus, the 1120-residue chain is Transcription-repair-coupling factor (1120 aa).

One can recognise a Helicase ATP-binding domain in the interval 591 to 756 (DLTNGMLMDR…MTGLKELSII (166 aa)). Residue 604 to 611 (GDVGFGKT) coordinates ATP. Residues 709 to 712 (DEEQ) carry the DEEQ box motif. Residues 777 to 933 (IIRDALLREH…TIASHDADLR (157 aa)) enclose the Helicase C-terminal domain.

It in the N-terminal section; belongs to the UvrB family. In the C-terminal section; belongs to the helicase family. RecG subfamily.

The protein resides in the cytoplasm. In terms of biological role, couples transcription and DNA repair by recognizing RNA polymerase (RNAP) stalled at DNA lesions. Mediates ATP-dependent release of RNAP and its truncated transcript from the DNA, and recruitment of nucleotide excision repair machinery to the damaged site. This chain is Transcription-repair-coupling factor, found in Rickettsia prowazekii (strain Madrid E).